We begin with the raw amino-acid sequence, 339 residues long: Glycerol-3-phosphate dehydrogenase [NAD(P)+] (339 aa).

S15, Y16, H36, and K110 together coordinate NADPH. Sn-glycerol 3-phosphate contacts are provided by K110, G139, and T141. An NADPH-binding site is contributed by A143. Residues K195, D248, S258, R259, and N260 each contribute to the sn-glycerol 3-phosphate site. The Proton acceptor role is filled by K195. R259 lines the NADPH pocket. Positions 283 and 285 each coordinate NADPH.

Belongs to the NAD-dependent glycerol-3-phosphate dehydrogenase family.

It is found in the cytoplasm. It catalyses the reaction sn-glycerol 3-phosphate + NAD(+) = dihydroxyacetone phosphate + NADH + H(+). The enzyme catalyses sn-glycerol 3-phosphate + NADP(+) = dihydroxyacetone phosphate + NADPH + H(+). It participates in membrane lipid metabolism; glycerophospholipid metabolism. Its function is as follows. Catalyzes the reduction of the glycolytic intermediate dihydroxyacetone phosphate (DHAP) to sn-glycerol 3-phosphate (G3P), the key precursor for phospholipid synthesis. The sequence is that of Glycerol-3-phosphate dehydrogenase [NAD(P)+] from Pectobacterium atrosepticum (strain SCRI 1043 / ATCC BAA-672) (Erwinia carotovora subsp. atroseptica).